The chain runs to 253 residues: 5'/3'-nucleotidase SurE (253 aa).

Residues D8, D9, S39, and N92 each coordinate a divalent metal cation.

The protein belongs to the SurE nucleotidase family. The cofactor is a divalent metal cation.

It is found in the cytoplasm. The catalysed reaction is a ribonucleoside 5'-phosphate + H2O = a ribonucleoside + phosphate. It carries out the reaction a ribonucleoside 3'-phosphate + H2O = a ribonucleoside + phosphate. It catalyses the reaction [phosphate](n) + H2O = [phosphate](n-1) + phosphate + H(+). Functionally, nucleotidase with a broad substrate specificity as it can dephosphorylate various ribo- and deoxyribonucleoside 5'-monophosphates and ribonucleoside 3'-monophosphates with highest affinity to 3'-AMP. Also hydrolyzes polyphosphate (exopolyphosphatase activity) with the preference for short-chain-length substrates (P20-25). Might be involved in the regulation of dNTP and NTP pools, and in the turnover of 3'-mononucleotides produced by numerous intracellular RNases (T1, T2, and F) during the degradation of various RNAs. The chain is 5'/3'-nucleotidase SurE from Escherichia coli O127:H6 (strain E2348/69 / EPEC).